A 530-amino-acid polypeptide reads, in one-letter code: UDP-glucuronosyltransferase 1A10 (530 aa).

The first 25 residues, 1–25 (MARAGWTSPVPLCVCLLLTCGFAEA), serve as a signal peptide directing secretion. Asn71, Asn292, and Asn344 each carry an N-linked (GlcNAc...) asparagine glycan. Residues 488–504 (VIGFLLAVVLTVAFITF) form a helical membrane-spanning segment.

Belongs to the UDP-glycosyltransferase family. Homodimer. Homooligomer. Interacts with UGT1A1, UGT1A3, UGT1A4, UGT1A6, UGT1A7, UGT1A8 and UGT1A9 to form heterodimers. Isoform 1 interacts with isoform 2/i2 suggesting that oligomerization is involved in negative regulation of transferase activity by isoform 2. Isoform 1 also interacts with respective i2 isoforms of UGT1A1, UGT1A3, UGT1A4, UGT1A6, UGT1A7, UGT1A8 and UGT1A9. As to expression, liver and colon. Isoform 1 and isoform 2 are expressed in colon, esophagus and small intestine; isoform 2 but not isoform 1 is expressed in liver or kidney.

It is found in the endoplasmic reticulum membrane. The enzyme catalyses glucuronate acceptor + UDP-alpha-D-glucuronate = acceptor beta-D-glucuronoside + UDP + H(+). It catalyses the reaction 17beta-estradiol + UDP-alpha-D-glucuronate = 17beta-estradiol 3-O-(beta-D-glucuronate) + UDP + H(+). It carries out the reaction 17beta-estradiol + UDP-alpha-D-glucuronate = 17beta-estradiol 17-O-(beta-D-glucuronate) + UDP + H(+). The catalysed reaction is 17alpha-estradiol + UDP-alpha-D-glucuronate = 17alpha-estradiol 3-O-(beta-D-glucuronate) + UDP + H(+). The enzyme catalyses 16alpha,17beta-estriol + UDP-alpha-D-glucuronate = 16alpha,17beta-estriol 3-O-(beta-D-glucuronate) + UDP + H(+). It catalyses the reaction 16beta,17beta-estriol + UDP-alpha-D-glucuronate = 16beta,17beta-estriol 3-O-(beta-D-glucuronate) + UDP + H(+). It carries out the reaction 16alpha,17alpha-estriol + UDP-alpha-D-glucuronate = 16alpha,17alpha-estriol 3-O-(beta-D-glucuronate) + UDP + H(+). The catalysed reaction is 16alpha-hydroxyestrone + UDP-alpha-D-glucuronate = 16alpha-hydroxyestrone 3-O-(beta-D-glucuronate) + UDP + H(+). The enzyme catalyses estrone + UDP-alpha-D-glucuronate = estrone 3-O-(beta-D-glucuronate) + UDP + H(+). It catalyses the reaction prunetin + UDP-alpha-D-glucuronate = prunetin-4'-O-beta-D-glucuronide + UDP. It carries out the reaction (5Z,8Z,11Z,14Z)-eicosatetraenoate + UDP-alpha-D-glucuronate = O-[(5Z),(8Z),(11Z),(14Z)-eicosatetraenoyl]-beta-D-glucuronate + UDP. The catalysed reaction is 15-hydroxy-(5Z,8Z,11Z,13E)-eicosatetraenoate + UDP-alpha-D-glucuronate = 15-O-(beta-D-glucuronosyl)-(5Z,8Z,11Z,14Z)-eicosatetraenoate + UDP + H(+). The enzyme catalyses prostaglandin B1 + UDP-alpha-D-glucuronate = 15-O-(beta-D-glucuronosyl)-prostaglandin B1 + UDP + H(+). It catalyses the reaction (E)-ferulate + UDP-alpha-D-glucuronate = (E)-4-O-(beta-D-glucuronosyl)-ferulate + UDP + H(+). It carries out the reaction (E)-ferulate + UDP-alpha-D-glucuronate = (E)-ferulic acid beta-D-glucuronate ester + UDP. The catalysed reaction is losartan + UDP-alpha-D-glucuronate = losartan-2-N-beta-D-glucuronide + UDP. The enzyme catalyses candesartan + UDP-alpha-D-glucuronate = candesartan O-beta-D-glucuronoside + UDP. It catalyses the reaction candesartan + UDP-alpha-D-glucuronate = candesartan-2-N-beta-D-glucuronide + UDP. It carries out the reaction zolasartan + UDP-alpha-D-glucuronate = zolarsartan-1-N-beta-D-glucuronide + UDP. UDP-glucuronosyltransferase (UGT) that catalyzes phase II biotransformation reactions in which lipophilic substrates are conjugated with glucuronic acid to increase the metabolite's water solubility, thereby facilitating excretion into either the urine or bile. Essential for the elimination and detoxification of drugs, xenobiotics and endogenous compounds. Catalyzes the glucuronidation of endogenous estrogen hormones such as estradiol, estrone and estriol. Involved in the glucuronidation of arachidonic acid (AA) and AA-derived eicosanoids including 15-HETE and PGB1. Involved in the glucuronidation of the phytochemical ferulic acid at the phenolic or the carboxylic acid group. Also catalyzes the glucuronidation of the isoflavones genistein, daidzein, glycitein, formononetin, biochanin A and prunetin, which are phytoestrogens with anticancer and cardiovascular properties. Involved in the glucuronidation of the AGTR1 angiotensin receptor antagonist losartan, caderastan and zolarsatan, drugs which can inhibit the effect of angiotensin II. Its function is as follows. Lacks UGT glucuronidation activity but acts as a negative regulator of isoform 1. This Homo sapiens (Human) protein is UDP-glucuronosyltransferase 1A10.